A 199-amino-acid polypeptide reads, in one-letter code: Putative pseudouridine methyltransferase (199 aa).

Residues Leu-132 and Cys-186 each coordinate S-adenosyl-L-methionine.

The protein belongs to the methyltransferase superfamily. TrmY family.

The protein resides in the cytoplasm. This Vibrio parahaemolyticus serotype O3:K6 (strain RIMD 2210633) protein is Putative pseudouridine methyltransferase.